Reading from the N-terminus, the 212-residue chain is Pyridoxine/pyridoxamine 5'-phosphate oxidase (212 aa).

FMN-binding positions include 59-64 (RMVLMK), 74-75 (YS), Lys-81, and Gln-103. Residue Lys-64 participates in substrate binding. Substrate is bound by residues Tyr-121 and Arg-125. FMN-binding positions include 138–139 (QS) and Trp-183. 189–191 (RLH) lines the substrate pocket. Arg-193 is a binding site for FMN.

It belongs to the pyridoxamine 5'-phosphate oxidase family. In terms of assembly, homodimer. The cofactor is FMN.

It carries out the reaction pyridoxamine 5'-phosphate + O2 + H2O = pyridoxal 5'-phosphate + H2O2 + NH4(+). The catalysed reaction is pyridoxine 5'-phosphate + O2 = pyridoxal 5'-phosphate + H2O2. It functions in the pathway cofactor metabolism; pyridoxal 5'-phosphate salvage; pyridoxal 5'-phosphate from pyridoxamine 5'-phosphate: step 1/1. The protein operates within cofactor metabolism; pyridoxal 5'-phosphate salvage; pyridoxal 5'-phosphate from pyridoxine 5'-phosphate: step 1/1. In terms of biological role, catalyzes the oxidation of either pyridoxine 5'-phosphate (PNP) or pyridoxamine 5'-phosphate (PMP) into pyridoxal 5'-phosphate (PLP). The chain is Pyridoxine/pyridoxamine 5'-phosphate oxidase from Rhodopseudomonas palustris (strain TIE-1).